The chain runs to 384 residues: Histidinol-phosphate aminotransferase 1 (384 aa).

An N6-(pyridoxal phosphate)lysine modification is found at Lys233.

This sequence belongs to the class-II pyridoxal-phosphate-dependent aminotransferase family. Histidinol-phosphate aminotransferase subfamily. Homodimer. It depends on pyridoxal 5'-phosphate as a cofactor.

It carries out the reaction L-histidinol phosphate + 2-oxoglutarate = 3-(imidazol-4-yl)-2-oxopropyl phosphate + L-glutamate. The protein operates within amino-acid biosynthesis; L-histidine biosynthesis; L-histidine from 5-phospho-alpha-D-ribose 1-diphosphate: step 7/9. This chain is Histidinol-phosphate aminotransferase 1, found in Thiobacillus denitrificans (strain ATCC 25259 / T1).